We begin with the raw amino-acid sequence, 52 residues long: Insulin (52 aa).

3 disulfide bridges follow: Cys7–Cys38, Cys19–Cys51, and Cys37–Cys42.

It belongs to the insulin family. In terms of assembly, heterodimer of a B chain and an A chain linked by two disulfide bonds.

It is found in the secreted. In terms of biological role, insulin decreases blood glucose concentration. It increases cell permeability to monosaccharides, amino acids and fatty acids. It accelerates glycolysis, the pentose phosphate cycle, and glycogen synthesis in liver. The chain is Insulin (ins) from Amia calva (Bowfin).